Consider the following 90-residue polypeptide: Auxin-responsive protein SAUR19 (90 aa).

Belongs to the ARG7 family. Interacts with and inhibits PP2C-D subfamily of type 2C phosphatases such as PP2C67/PP2C-D1, PP2C64/PP2C-D5 and PP2C46/PP2C-D6.

It is found in the cell membrane. In terms of biological role, provide a mechanistic link between auxin and plasma membrane H(+)-ATPases (PM H(+)-ATPases, e.g. AHA1 and AHA2), and triggers PM H(+)-ATPases activity by promoting phosphorylation of their C-terminal autoinhibitory domain as a result of PP2C-D subfamily of type 2C phosphatases inhibition, thus leading to the acidification of the apoplast and the facilitation of solutes and water uptake to drive cell expansion. Prevents the apical hook maintenance of etiolated seedlings. Functions as positive effectors of cell expansion through modulation of auxin transport. This Arabidopsis thaliana (Mouse-ear cress) protein is Auxin-responsive protein SAUR19.